A 301-amino-acid chain; its full sequence is Phosducin-like protein (301 aa).

At Thr-2 the chain carries N-acetylthreonine. Residues Tyr-15–Ile-53 are disordered. Phosphoserine occurs at positions 20, 25, 226, 293, and 296. Positions Leu-37–Glu-299 constitute a Phosducin domain. A thioredoxin fold region spans residues Phe-158–Asp-301.

Belongs to the phosducin family. As to quaternary structure, forms a complex with the beta and gamma subunits of the GTP-binding protein, transducin. Interacts with the CCT chaperonin complex.

It is found in the cell projection. It localises to the cilium. Functions as a co-chaperone for CCT in the assembly of heterotrimeric G protein complexes, facilitates the assembly of both Gbeta-Ggamma and RGS-Gbeta5 heterodimers. Also acts as a positive regulator of hedgehog signaling and regulates ciliary function. The sequence is that of Phosducin-like protein (PDCL) from Bos taurus (Bovine).